Consider the following 214-residue polypeptide: MQAYQRDFIRFAIDRGVLRFGEFTLKSGRTSPYFFNAGLFNSGSALAQLGRFYAAAIVESGISFDVLFGPAYKGIPLAAATAVALAEHHGQDLPWCFNRKEAKAHGEGGSLVGAPLTGDVLIIDDVITAGTAIREVMQIIASQDGAKAAGVLIALNRQERGNGELSAIQEVERDFGIPVVSIVSLNQVLQFLEDDPQLKQHLPAVRAYREQFGV.

Position 26 (Lys-26) interacts with 5-phospho-alpha-D-ribose 1-diphosphate. 34–35 (FF) is an orotate binding site. 5-phospho-alpha-D-ribose 1-diphosphate-binding positions include 72–73 (YK), Arg-99, Lys-100, Lys-103, His-105, and 124–132 (DDVITAGTA). Residues Thr-128 and Arg-157 each coordinate orotate.

This sequence belongs to the purine/pyrimidine phosphoribosyltransferase family. PyrE subfamily. In terms of assembly, homodimer. The cofactor is Mg(2+).

It carries out the reaction orotidine 5'-phosphate + diphosphate = orotate + 5-phospho-alpha-D-ribose 1-diphosphate. Its pathway is pyrimidine metabolism; UMP biosynthesis via de novo pathway; UMP from orotate: step 1/2. In terms of biological role, catalyzes the transfer of a ribosyl phosphate group from 5-phosphoribose 1-diphosphate to orotate, leading to the formation of orotidine monophosphate (OMP). The polypeptide is Orotate phosphoribosyltransferase (Pseudomonas fluorescens (strain SBW25)).